Consider the following 502-residue polypeptide: Thermosome subunit beta (502 aa).

The protein belongs to the TCP-1 chaperonin family. Forms a Heterooligomeric complex of two stacked eight-membered rings.

In terms of biological role, molecular chaperone; binds unfolded polypeptides in vitro, and has a weak ATPase activity. The protein is Thermosome subunit beta (thsB) of Desulfurococcus mucosus (Desulfurococcus mobilis).